Reading from the N-terminus, the 61-residue chain is Translational regulator CsrA (61 aa).

It belongs to the CsrA/RsmA family. Homodimer; the beta-strands of each monomer intercalate to form a hydrophobic core, while the alpha-helices form wings that extend away from the core.

It is found in the cytoplasm. In terms of biological role, a key translational regulator that binds mRNA to regulate translation initiation and/or mRNA stability. Mediates global changes in gene expression, shifting from rapid growth to stress survival by linking envelope stress, the stringent response and the catabolite repression systems. Usually binds in the 5'-UTR; binding at or near the Shine-Dalgarno sequence prevents ribosome-binding, repressing translation, binding elsewhere in the 5'-UTR can activate translation and/or stabilize the mRNA. Its function is antagonized by small RNA(s). This chain is Translational regulator CsrA, found in Actinobacillus succinogenes (strain ATCC 55618 / DSM 22257 / CCUG 43843 / 130Z).